Here is a 493-residue protein sequence, read N- to C-terminus: 2-amino-4-deoxychorismate synthase (493 aa).

The protein belongs to the anthranilate synthase component I family. Requires Mg(2+) as cofactor.

It carries out the reaction (2S)-2-amino-4-deoxychorismate + L-glutamate = chorismate + L-glutamine. Converts chorismate to 2-amino-4-deoxychorismate (ADIC). Involved in the biosynthesis of the benzoxazolinate moiety of the enediyne antitumor antibiotic C-1027. This chain is 2-amino-4-deoxychorismate synthase (sgcD), found in Streptomyces globisporus.